Reading from the N-terminus, the 403-residue chain is Phospholipase A1-II 2 (403 aa).

Serine 218 functions as the Acyl-ester intermediate in the catalytic mechanism. Active-site charge relay system residues include serine 218, aspartate 286, and histidine 323. Residues 381–403 (GPDGRWVLQDHEPDDDDDDDDDD) are disordered. Over residues 392 to 403 (EPDDDDDDDDDD) the composition is skewed to acidic residues.

This sequence belongs to the AB hydrolase superfamily. Lipase family.

The protein resides in the cytoplasm. Acylhydrolase that catalyzes the hydrolysis of phospholipids at the sn-1 position. This chain is Phospholipase A1-II 2, found in Oryza sativa subsp. indica (Rice).